Consider the following 175-residue polypeptide: Probable coatomer subunit zeta-A (175 aa).

The protein belongs to the adaptor complexes small subunit family. In terms of assembly, oligomeric complex that consists of at least the alpha, beta, beta', gamma, delta, epsilon and zeta subunits.

Its subcellular location is the cytoplasm. The protein localises to the golgi apparatus membrane. It is found in the cytoplasmic vesicle. It localises to the COPI-coated vesicle membrane. In terms of biological role, the coatomer is a cytosolic protein complex that binds to dilysine motifs and reversibly associates with Golgi non-clathrin-coated vesicles, which further mediate biosynthetic protein transport from the ER, via the Golgi up to the trans Golgi network. Coatomer complex is required for budding from Golgi membranes, and is essential for the retrograde Golgi-to-ER transport of dilysine-tagged proteins. The zeta subunit may be involved in regulating the coat assembly and, hence, the rate of biosynthetic protein transport due to its association-dissociation properties with the coatomer complex. In Dictyostelium discoideum (Social amoeba), this protein is Probable coatomer subunit zeta-A (copZa).